A 778-amino-acid chain; its full sequence is Semaphorin-3ab (778 aa).

The signal sequence occupies residues 1-17 (MDYLWWIVLLIWTLIAP). Residues 32–515 (RLKPSYKEML…SAIGVSQMPL (484 aa)) enclose the Sema domain. N-linked (GlcNAc...) asparagine glycosylation is present at asparagine 54. A disulfide bridge connects residues cysteine 105 and cysteine 116. The N-linked (GlcNAc...) asparagine glycan is linked to asparagine 127. 4 disulfide bridges follow: cysteine 134–cysteine 143, cysteine 270–cysteine 382, cysteine 294–cysteine 342, and cysteine 518–cysteine 536. One can recognise an Ig-like C2-type domain in the interval 579–668 (GEAGLLDKTV…FIQTLLRLTL (90 aa)). An N-linked (GlcNAc...) asparagine glycan is attached at asparagine 593. A disulfide bond links cysteine 652 and cysteine 716. Residues 727 to 778 (RRQKANLLHASQSHTSQILHSSQSHAKWKLLQENKKGRNRRTHEMQRAPRSV) form a disordered region. Polar residues predominate over residues 735–751 (HASQSHTSQILHSSQSH). A compositionally biased stretch (basic and acidic residues) spans 756–778 (LLQENKKGRNRRTHEMQRAPRSV).

Belongs to the semaphorin family. Expressed in rhombomeres three and five, and in the posterior half of newly formed somites which is avoided by ventrally extending motor axons.

The protein localises to the secreted. Might normally influence the midsegmental pathway choice of the ventrally extending motor axons by contributing to a repulsive domain in the posterior somite. This is Semaphorin-3ab (sema3ab) from Danio rerio (Zebrafish).